The following is a 488-amino-acid chain: 6-phosphogluconate dehydrogenase, decarboxylating (488 aa).

NADP(+) contacts are provided by residues 9-14 (GLAVMG), 32-34 (NRT), 74-76 (VKA), and N102. Substrate is bound by residues N102 and 128-130 (SGG). Residue K183 is the Proton acceptor of the active site. 186 to 187 (HN) provides a ligand contact to substrate. E190 functions as the Proton donor in the catalytic mechanism. Substrate-binding residues include Y191, K260, R287, R451, and H457.

This sequence belongs to the 6-phosphogluconate dehydrogenase family. In terms of assembly, homodimer.

It catalyses the reaction 6-phospho-D-gluconate + NADP(+) = D-ribulose 5-phosphate + CO2 + NADPH. It functions in the pathway carbohydrate degradation; pentose phosphate pathway; D-ribulose 5-phosphate from D-glucose 6-phosphate (oxidative stage): step 3/3. Catalyzes the oxidative decarboxylation of 6-phosphogluconate to ribulose 5-phosphate and CO(2), with concomitant reduction of NADP to NADPH. This chain is 6-phosphogluconate dehydrogenase, decarboxylating (gnd), found in Treponema pallidum (strain Nichols).